The following is a 259-amino-acid chain: GTP cyclohydrolase FolE2 (259 aa).

The protein belongs to the GTP cyclohydrolase IV family.

The catalysed reaction is GTP + H2O = 7,8-dihydroneopterin 3'-triphosphate + formate + H(+). It participates in cofactor biosynthesis; 7,8-dihydroneopterin triphosphate biosynthesis; 7,8-dihydroneopterin triphosphate from GTP: step 1/1. Its function is as follows. Converts GTP to 7,8-dihydroneopterin triphosphate. The chain is GTP cyclohydrolase FolE2 from Halorhodospira halophila (strain DSM 244 / SL1) (Ectothiorhodospira halophila (strain DSM 244 / SL1)).